The following is a 451-amino-acid chain: Glycosyltransferase-like At2g41451 (451 aa).

Positions 1–23 (MASSDSSYSRKFLLITFLPLSLA) are cleaved as a signal peptide. N-linked (GlcNAc...) asparagine glycosylation is found at Asn36, Asn137, Asn168, Asn441, and Asn444. The 237-residue stretch at 109–345 (QTLPWIFYHK…TYSKFSDLTS (237 aa)) folds into the GT92 domain.

It belongs to the glycosyltransferase 92 family.

It is found in the secreted. The protein resides in the cell wall. Its subcellular location is the cytoplasm. It localises to the cell membrane. Its function is as follows. Involved in the coordination between cell elongation and cellulose synthesis by promoting the expression of genes involved in cell elongation and cellulose synthesis. Acts as a regulator of plasmodesmatal permeability. Maybe a glycosyltransferase. This chain is Glycosyltransferase-like At2g41451, found in Arabidopsis thaliana (Mouse-ear cress).